The chain runs to 44 residues: Thymosin beta-10 (44 aa).

This sequence belongs to the thymosin beta family.

Its subcellular location is the cytoplasm. The protein resides in the cytoskeleton. Plays an important role in the organization of the cytoskeleton. Binds to and sequesters actin monomers (G actin) and therefore inhibits actin polymerization. This is Thymosin beta-10 from Torpedo marmorata (Marbled electric ray).